A 306-amino-acid polypeptide reads, in one-letter code: N-acetylmuramic acid/N-acetylglucosamine kinase (306 aa).

Position 12 (S12) interacts with ATP. N35 is a binding site for substrate. ATP is bound at residue T124. Residues 142–144 (GWG) and D149 each bind substrate. A208 provides a ligand contact to ATP.

The protein belongs to the eukaryotic-type N-acetylglucosamine kinase family. Requires Mg(2+) as cofactor.

The protein localises to the cytoplasm. The enzyme catalyses N-acetyl-D-glucosamine + ATP = N-acetyl-D-glucosamine 6-phosphate + ADP + H(+). The catalysed reaction is N-acetyl-D-muramate + ATP = N-acetyl-D-muramate 6-phosphate + ADP + H(+). It functions in the pathway cell wall biogenesis; peptidoglycan recycling. Functionally, catalyzes the ATP-dependent phosphorylation of both cell wall (peptidoglycan) amino sugars, N-acetylmuramic acid (MurNAc) and N-acetylglucosamine (GlcNAc), at the 6-hydroxyl group. Neither the non-N-acetylated forms of the cell wall sugars, i.e., glucosamine and/or muramic acid, nor epimeric hexoses or 1,6-anhydro-MurNAc are substrates for the enzyme. May have a role in the rescue of the murein sugars GlcNAc and MurNAc released from muropeptides during cell wall turnover in C.acetobutylicum. The polypeptide is N-acetylmuramic acid/N-acetylglucosamine kinase (Clostridium acetobutylicum (strain ATCC 824 / DSM 792 / JCM 1419 / IAM 19013 / LMG 5710 / NBRC 13948 / NRRL B-527 / VKM B-1787 / 2291 / W)).